Here is a 291-residue protein sequence, read N- to C-terminus: ATP synthase gamma chain (291 aa).

The protein belongs to the ATPase gamma chain family. As to quaternary structure, F-type ATPases have 2 components, CF(1) - the catalytic core - and CF(0) - the membrane proton channel. CF(1) has five subunits: alpha(3), beta(3), gamma(1), delta(1), epsilon(1). CF(0) has three main subunits: a, b and c.

The protein localises to the cell membrane. Functionally, produces ATP from ADP in the presence of a proton gradient across the membrane. The gamma chain is believed to be important in regulating ATPase activity and the flow of protons through the CF(0) complex. The protein is ATP synthase gamma chain of Lachnoclostridium phytofermentans (strain ATCC 700394 / DSM 18823 / ISDg) (Clostridium phytofermentans).